We begin with the raw amino-acid sequence, 67 residues long: Probable Sec-independent protein translocase protein TatE (67 aa).

Residues 4-21 form a helical membrane-spanning segment; it reads ISITKLLVVAALVVLLFG.

It belongs to the TatA/E family. TatE subfamily.

It localises to the cell inner membrane. Its function is as follows. Part of the twin-arginine translocation (Tat) system that transports large folded proteins containing a characteristic twin-arginine motif in their signal peptide across membranes. TatE shares overlapping functions with TatA. This Salmonella dublin (strain CT_02021853) protein is Probable Sec-independent protein translocase protein TatE.